A 345-amino-acid chain; its full sequence is NADPH dehydrogenase (345 aa).

23-26 (SPMC) serves as a coordination point for FMN. Tyrosine 28 serves as a coordination point for substrate. Residues alanine 60 and glutamine 102 each coordinate FMN. Residue 164–167 (HGAH) participates in substrate binding. Residues arginine 215 and 307–308 (GR) each bind FMN.

The protein belongs to the NADH:flavin oxidoreductase/NADH oxidase family. NamA subfamily. As to quaternary structure, homotetramer. It depends on FMN as a cofactor.

The enzyme catalyses A + NADPH + H(+) = AH2 + NADP(+). Functionally, catalyzes the reduction of the double bond of an array of alpha,beta-unsaturated aldehydes and ketones. It also reduces the nitro group of nitroester and nitroaromatic compounds. It could have a role in detoxification processes. The protein is NADPH dehydrogenase of Bacillus cereus (strain ZK / E33L).